Consider the following 83-residue polypeptide: Small ribosomal subunit protein eS21 (83 aa).

An N-acetylmethionine modification is found at Met1. Residue Lys41 forms a Glycyl lysine isopeptide (Lys-Gly) (interchain with G-Cter in SUMO2) linkage. Position 81 is an N6-acetyllysine (Lys81).

The protein belongs to the eukaryotic ribosomal protein eS21 family. As to quaternary structure, component of the 40S small ribosomal subunit.

Its subcellular location is the cytoplasm. It is found in the cytosol. The protein resides in the rough endoplasmic reticulum. Component of the small ribosomal subunit. The ribosome is a large ribonucleoprotein complex responsible for the synthesis of proteins in the cell. This Sus scrofa (Pig) protein is Small ribosomal subunit protein eS21 (RPS21).